We begin with the raw amino-acid sequence, 311 residues long: Methionyl-tRNA formyltransferase (311 aa).

110–113 (SLLP) lines the (6S)-5,6,7,8-tetrahydrofolate pocket.

Belongs to the Fmt family.

The catalysed reaction is L-methionyl-tRNA(fMet) + (6R)-10-formyltetrahydrofolate = N-formyl-L-methionyl-tRNA(fMet) + (6S)-5,6,7,8-tetrahydrofolate + H(+). Its function is as follows. Attaches a formyl group to the free amino group of methionyl-tRNA(fMet). The formyl group appears to play a dual role in the initiator identity of N-formylmethionyl-tRNA by promoting its recognition by IF2 and preventing the misappropriation of this tRNA by the elongation apparatus. The chain is Methionyl-tRNA formyltransferase from Streptococcus pyogenes serotype M49 (strain NZ131).